Here is a 301-residue protein sequence, read N- to C-terminus: Ornithine carbamoyltransferase (301 aa).

Residues Arg100 and 127–130 (HPCQ) each bind carbamoyl phosphate. L-ornithine is bound by residues Asn158, Asp221, and 225 to 226 (SM). Cys260 and Arg288 together coordinate carbamoyl phosphate.

This sequence belongs to the aspartate/ornithine carbamoyltransferase superfamily. OTCase family. The enzyme is present as a mixture of trimers and dodecamers, with the relative proportions of the two forms depending on the salt concentration. In addition, the trimeric fraction could reassociate into dodecamers when the salt concentration is increased. It appears that in vivo, the main fraction is in the dodecameric form.

The protein resides in the cytoplasm. The catalysed reaction is carbamoyl phosphate + L-ornithine = L-citrulline + phosphate + H(+). Its pathway is amino-acid biosynthesis; L-arginine biosynthesis; L-arginine from L-ornithine and carbamoyl phosphate: step 1/3. Inhibited by excess of arginine and by the bisubstrate delta-N-phosphonoacetyl-L-ornithine (PALO). Its function is as follows. Reversibly catalyzes the transfer of the carbamoyl group from carbamoyl phosphate (CP) to the N(epsilon) atom of ornithine (ORN) to produce L-citrulline, which is a substrate for argininosuccinate synthetase, the enzyme involved in the final step in arginine biosynthesis. The sequence is that of Ornithine carbamoyltransferase from Moritella abyssi.